Reading from the N-terminus, the 1153-residue chain is Myosin-3 (1153 aa).

The Myosin N-terminal SH3-like domain maps to 104–153 (KKVLQFWVQLPNGNWELGKIMSTSGEESVIVVTEGKVLKVKSETLVPANP). Positions 157 to 829 (DGVDDLMQLS…QIGVLEDTRN (673 aa)) constitute a Myosin motor domain. ATP-binding positions include 248–255 (GESGAGKT) and 296–304 (NDNSSRFGK). Actin-binding stretches follow at residues 581-615 (LFEKKPLGLLSLLDEESTFPNGTDLTLANKLKQHL) and 709-731 (LFQLMQRLGNTTPHFIRCIKPNN). IQ domains follow at residues 831 to 860 (TLHGILRLQSYFRGHQARCRLKELKTGITI), 854 to 883 (LKTGITILQSFVRGEKMRKEYTELLQRHRA), and 903 to 932 (TVDASAVIQSAIRGELVRRCAGDIGWLSSG). Residues 948-996 (YLSDLQRRVLRTEAALREKEEENDILRQRVQQYDNRWSEYETKMKSMEE) are a coiled coil. The disordered stretch occupies residues 1020–1050 (DSARNSDASVNASDATDLDSGGSHYQMGHGR). Residues 1024–1033 (NSDASVNASD) show a composition bias toward polar residues.

Belongs to the TRAFAC class myosin-kinesin ATPase superfamily. Myosin family. Plant myosin class VIII subfamily. Homodimer.

In terms of biological role, myosin heavy chain that is required for the cell cycle-regulated transport of various organelles and proteins for their segregation. Functions by binding with its tail domain to receptor proteins on organelles and exerting force with its N-terminal motor domain against actin filaments, thereby transporting its cargo along polarized actin cables. This is Myosin-3 (VIII-A) from Arabidopsis thaliana (Mouse-ear cress).